The following is a 302-amino-acid chain: Acetylesterase (302 aa).

The signal sequence occupies residues 1-21 (MGRFLTTTALALLATGGAATA). 2 N-linked (GlcNAc...) asparagine glycosylation sites follow: Asn84 and Asn101.

It belongs to the carbohydrate esterase CE16 family.

It localises to the secreted. It catalyses the reaction an acetyl ester + H2O = an aliphatic alcohol + acetate + H(+). Acetyl esterase that acts as an exo-deacetylase. Liberates acetic acid from xylo-oligomers. The protein is Acetylesterase of Thermothelomyces thermophilus (Myceliophthora thermophila).